Reading from the N-terminus, the 83-residue chain is Short neurotoxin 1 (83 aa).

The signal sequence occupies residues 1 to 21; the sequence is MKTLLLTLVVVTIVCLDLGYT. 4 disulfides stabilise this stretch: Cys-24/Cys-45, Cys-38/Cys-62, Cys-64/Cys-75, and Cys-76/Cys-81.

The protein belongs to the three-finger toxin family. Short-chain subfamily. Type I alpha-neurotoxin sub-subfamily. As to expression, expressed by the venom gland.

The protein localises to the secreted. In terms of biological role, binds to muscle nicotinic acetylcholine receptor (nAChR) and inhibit acetylcholine from binding to the receptor, thereby impairing neuromuscular transmission. The sequence is that of Short neurotoxin 1 from Oxyuranus scutellatus scutellatus (Australian taipan).